A 1044-amino-acid polypeptide reads, in one-letter code: Isoleucine--tRNA ligase (1044 aa).

The 'HIGH' region motif lies at 49–59 (PYCSGRIHLGT). The 'KMSKS' region signature appears at 591–595 (KMSKS). Lysine 594 serves as a coordination point for ATP.

Belongs to the class-I aminoacyl-tRNA synthetase family. IleS type 2 subfamily. As to quaternary structure, monomer. Requires Zn(2+) as cofactor.

It localises to the cytoplasm. The catalysed reaction is tRNA(Ile) + L-isoleucine + ATP = L-isoleucyl-tRNA(Ile) + AMP + diphosphate. Functionally, catalyzes the attachment of isoleucine to tRNA(Ile). As IleRS can inadvertently accommodate and process structurally similar amino acids such as valine, to avoid such errors it has two additional distinct tRNA(Ile)-dependent editing activities. One activity is designated as 'pretransfer' editing and involves the hydrolysis of activated Val-AMP. The other activity is designated 'posttransfer' editing and involves deacylation of mischarged Val-tRNA(Ile). The protein is Isoleucine--tRNA ligase of Methanothermobacter thermautotrophicus (strain ATCC 29096 / DSM 1053 / JCM 10044 / NBRC 100330 / Delta H) (Methanobacterium thermoautotrophicum).